Here is a 160-residue protein sequence, read N- to C-terminus: MGVYLAVLFSLLVIEMAILFILVLPLPQRMRRWLYIRYSIISTNKKFRTYMVGIMIFVGLLFIDSWKRSQIRVSTYRNQKNPYIINSVTPVDALASRAYNQRNVYISGFIIYFYICILTVMSILRRIVEWNDKMKAGDDILKEKLRRKQKYLEELQKKKF.

Residues 1–2 (MG) are Lumenal-facing. Residues 3–23 (VYLAVLFSLLVIEMAILFILV) traverse the membrane as a helical segment. Residues 24–45 (LPLPQRMRRWLYIRYSIISTNK) lie on the Cytoplasmic side of the membrane. The chain crosses the membrane as a helical span at residues 46–66 (KFRTYMVGIMIFVGLLFIDSW). The Lumenal portion of the chain corresponds to 67–103 (KRSQIRVSTYRNQKNPYIINSVTPVDALASRAYNQRN). Residues 104–124 (VYISGFIIYFYICILTVMSIL) traverse the membrane as a helical segment. The Cytoplasmic segment spans residues 125 to 160 (RRIVEWNDKMKAGDDILKEKLRRKQKYLEELQKKKF). The short motif at 157–160 (KKKF) is the Di-lysine motif element.

The protein belongs to the BCAP29/BCAP31 family.

It localises to the endoplasmic reticulum membrane. May play a role in anterograde transport of membrane proteins from the endoplasmic reticulum to the Golgi. This chain is Endoplasmic reticulum transmembrane protein 2 (YET2), found in Saccharomyces cerevisiae (strain ATCC 204508 / S288c) (Baker's yeast).